The chain runs to 172 residues: Ribosome maturation factor RimM (172 aa).

Residues 100–172 (PGEYYRVDLV…RIVVDWDPGF (73 aa)) enclose the PRC barrel domain.

Belongs to the RimM family. In terms of assembly, binds ribosomal protein uS19.

The protein resides in the cytoplasm. In terms of biological role, an accessory protein needed during the final step in the assembly of 30S ribosomal subunit, possibly for assembly of the head region. Essential for efficient processing of 16S rRNA. May be needed both before and after RbfA during the maturation of 16S rRNA. It has affinity for free ribosomal 30S subunits but not for 70S ribosomes. The sequence is that of Ribosome maturation factor RimM from Methylococcus capsulatus (strain ATCC 33009 / NCIMB 11132 / Bath).